Here is a 210-residue protein sequence, read N- to C-terminus: Probable nicotinate-nucleotide adenylyltransferase (210 aa).

The protein belongs to the NadD family.

The catalysed reaction is nicotinate beta-D-ribonucleotide + ATP + H(+) = deamido-NAD(+) + diphosphate. Its pathway is cofactor biosynthesis; NAD(+) biosynthesis; deamido-NAD(+) from nicotinate D-ribonucleotide: step 1/1. In terms of biological role, catalyzes the reversible adenylation of nicotinate mononucleotide (NaMN) to nicotinic acid adenine dinucleotide (NaAD). This Streptococcus pyogenes serotype M1 protein is Probable nicotinate-nucleotide adenylyltransferase.